We begin with the raw amino-acid sequence, 155 residues long: Large ribosomal subunit protein uL22 (155 aa).

This sequence belongs to the universal ribosomal protein uL22 family. Part of the 50S ribosomal subunit.

Functionally, this protein binds specifically to 23S rRNA. It makes multiple contacts with different domains of the 23S rRNA in the assembled 50S subunit and ribosome. In terms of biological role, the globular domain of the protein is located near the polypeptide exit tunnel on the outside of the subunit, while an extended beta-hairpin is found that lines the wall of the exit tunnel in the center of the 70S ribosome. The protein is Large ribosomal subunit protein uL22 of Pyrococcus furiosus (strain ATCC 43587 / DSM 3638 / JCM 8422 / Vc1).